The following is a 159-amino-acid chain: Succinate dehydrogenase [ubiquinone] cytochrome b small subunit, mitochondrial (159 aa).

A mitochondrion-targeting transit peptide spans 1 to 36 (MATLWRLSVLCGARGGGALVLRTSVVRPAHVSAFLQ). At 37-63 (DRHTPGWCGVQHIHLSPSHQASSKAAS) the chain is on the mitochondrial matrix side. Residues 64-85 (LHWTGERVVSVLLLGLLPAAYL) form a helical membrane-spanning segment. At 86-90 (NPCSA) the chain is on the mitochondrial intermembrane side. The chain crosses the membrane as a helical span at residues 91–111 (MDYSLAAALTLHGHWGIGQVV). His102 contacts heme b. Residues 112 to 120 (TDYVRGDAL) are Mitochondrial matrix-facing. Tyr114 contacts a ubiquinone. Residues 121 to 142 (QKVAKAGLLALSAFTFAGLCYF) form a helical membrane-spanning segment. Over 143–159 (NYHDVGICKAVAMLWKL) the chain is Mitochondrial intermembrane.

This sequence belongs to the CybS family. As to quaternary structure, component of complex II composed of four subunits: the flavoprotein (FP) SDHA, iron-sulfur protein (IP) SDHB, and a cytochrome b560 composed of SDHC and SDHD.

It is found in the mitochondrion inner membrane. The protein operates within carbohydrate metabolism; tricarboxylic acid cycle. Functionally, membrane-anchoring subunit of succinate dehydrogenase (SDH) that is involved in complex II of the mitochondrial electron transport chain and is responsible for transferring electrons from succinate to ubiquinone (coenzyme Q). SDH also oxidizes malate to the non-canonical enol form of oxaloacetate, enol-oxaloacetate. Enol-oxaloacetate, which is a potent inhibitor of the succinate dehydrogenase activity, is further isomerized into keto-oxaloacetate. This chain is Succinate dehydrogenase [ubiquinone] cytochrome b small subunit, mitochondrial (SDHD), found in Sus scrofa (Pig).